The following is a 195-amino-acid chain: Fe/S biogenesis protein NfuA (195 aa).

The [4Fe-4S] cluster site is built by cysteine 152 and cysteine 155.

Belongs to the NfuA family. As to quaternary structure, homodimer. The cofactor is [4Fe-4S] cluster.

Its function is as follows. Involved in iron-sulfur cluster biogenesis. Binds a 4Fe-4S cluster, can transfer this cluster to apoproteins, and thereby intervenes in the maturation of Fe/S proteins. Could also act as a scaffold/chaperone for damaged Fe/S proteins. This is Fe/S biogenesis protein NfuA from Vibrio cholerae serotype O1 (strain ATCC 39315 / El Tor Inaba N16961).